Consider the following 240-residue polypeptide: Large ribosomal subunit protein bL25 (240 aa).

Positions 1–23 (MATVKELKATARPKAGKGAARAE) are disordered. Residues 10–19 (TARPKAGKGA) show a composition bias toward low complexity.

Belongs to the bacterial ribosomal protein bL25 family. CTC subfamily. As to quaternary structure, part of the 50S ribosomal subunit; part of the 5S rRNA/L5/L18/L25 subcomplex. Contacts the 5S rRNA. Binds to the 5S rRNA independently of L5 and L18.

In terms of biological role, this is one of the proteins that binds to the 5S RNA in the ribosome where it forms part of the central protuberance. This Afipia carboxidovorans (strain ATCC 49405 / DSM 1227 / KCTC 32145 / OM5) (Oligotropha carboxidovorans) protein is Large ribosomal subunit protein bL25.